We begin with the raw amino-acid sequence, 314 residues long: DNA oxidative demethylase ALKBH2 (314 aa).

Over residues 1–28 (MTNPLNSTAANRSNQPSSDGISDGQITN) the composition is skewed to polar residues. Positions 1–75 (MTNPLNSTAA…KRFHYHQDQR (75 aa)) are disordered. A compositionally biased stretch (basic and acidic residues) spans 57-75 (NGKDDSDTKKRFHYHQDQR). Residues Trp132 and 160-163 (ALVY) each bind substrate. The Fe2OG dioxygenase domain occupies 194-314 (RFNSLLLNRY…RINLTFRLVL (121 aa)). 2-oxoglutarate is bound at residue 201–203 (NRY). His213 and Asp215 together coordinate Fe cation. A substrate-binding site is contributed by Asp216. Positions 242–271 (KKDEESSQGKTGDSGPAKKRLKRSSREDQQ) are disordered. A Fe cation-binding site is contributed by His293. Residues Arg305 and 305–311 (RINLTFR) contribute to the 2-oxoglutarate site.

This sequence belongs to the alkB family. The cofactor is Fe(2+). As to expression, expressed ubiquitously, including in seedlings, leaves and flowers.

It is found in the nucleus. It catalyses the reaction a methylated nucleobase within DNA + 2-oxoglutarate + O2 = a nucleobase within DNA + formaldehyde + succinate + CO2. Functionally, dioxygenase that repairs alkylated DNA containing 1-methyladenine and 1-ethenoadenine by oxidative demethylation. Accepts double-stranded and single-stranded substrates, with a preference for dsDNA over ssDNA. Confers resistance to methylating agents such as methylmethanesulphonate (MMS). This is DNA oxidative demethylase ALKBH2 (ALKBH2) from Arabidopsis thaliana (Mouse-ear cress).